A 253-amino-acid polypeptide reads, in one-letter code: Ribonuclease 3 (253 aa).

The RNase III domain occupies 29-157 (VDELQKTIGH…MLGAVFLDAG (129 aa)). E70 lines the Mg(2+) pocket. D74 is an active-site residue. The Mg(2+) site is built by D143 and E146. E146 is a catalytic residue. A DRBM domain is found at 184 to 253 (DYKSQLQELT…AARAVATLDK (70 aa)).

It belongs to the ribonuclease III family. In terms of assembly, homodimer. Mg(2+) serves as cofactor.

It is found in the cytoplasm. The catalysed reaction is Endonucleolytic cleavage to 5'-phosphomonoester.. In terms of biological role, digests double-stranded RNA. Involved in the processing of primary rRNA transcript to yield the immediate precursors to the large and small rRNAs (23S and 16S). Processes some mRNAs, and tRNAs when they are encoded in the rRNA operon. Processes pre-crRNA and tracrRNA of type II CRISPR loci if present in the organism. The protein is Ribonuclease 3 of Nitratidesulfovibrio vulgaris (strain ATCC 29579 / DSM 644 / CCUG 34227 / NCIMB 8303 / VKM B-1760 / Hildenborough) (Desulfovibrio vulgaris).